A 284-amino-acid polypeptide reads, in one-letter code: NAD kinase (284 aa).

Asp-65 acts as the Proton acceptor in catalysis. Residues 65-66 (DG), 139-140 (ND), Arg-150, Arg-167, Asp-169, and Gln-239 each bind NAD(+).

It belongs to the NAD kinase family. It depends on a divalent metal cation as a cofactor.

It localises to the cytoplasm. It catalyses the reaction NAD(+) + ATP = ADP + NADP(+) + H(+). Its function is as follows. Involved in the regulation of the intracellular balance of NAD and NADP, and is a key enzyme in the biosynthesis of NADP. Catalyzes specifically the phosphorylation on 2'-hydroxyl of the adenosine moiety of NAD to yield NADP. This Desulfatibacillum aliphaticivorans protein is NAD kinase.